Reading from the N-terminus, the 92-residue chain is Small ribosomal subunit protein bS18 (92 aa).

It belongs to the bacterial ribosomal protein bS18 family. Part of the 30S ribosomal subunit. Forms a tight heterodimer with protein bS6.

In terms of biological role, binds as a heterodimer with protein bS6 to the central domain of the 16S rRNA, where it helps stabilize the platform of the 30S subunit. The protein is Small ribosomal subunit protein bS18 of Ralstonia nicotianae (strain ATCC BAA-1114 / GMI1000) (Ralstonia solanacearum).